Reading from the N-terminus, the 407-residue chain is Peptidase T (407 aa).

Residue His82 participates in Zn(2+) binding. Asp84 is a catalytic residue. Asp143 lines the Zn(2+) pocket. Residue Glu177 is the Proton acceptor of the active site. Zn(2+)-binding residues include Glu178, Asp200, and His382.

This sequence belongs to the peptidase M20B family. Zn(2+) is required as a cofactor.

It localises to the cytoplasm. It carries out the reaction Release of the N-terminal residue from a tripeptide.. Its function is as follows. Cleaves the N-terminal amino acid of tripeptides. The chain is Peptidase T from Streptococcus pyogenes serotype M28 (strain MGAS6180).